A 483-amino-acid chain; its full sequence is MPLCIPQVLLALFLSVLIAQGEGSRRRATQAHSTTQPALLRLSDHLLANYKKGVRPVRDWRKPTLVSIDVIMYAILNVDEKNQVLTTYIWYRQFWTDEFLQWTPEDFDNVTKLSIPTDSIWVPDILINEFVDVGKSPSIPYVYVHHQGEVQNYKPLQLVTACSLDIYNFPFDVQNCSLTFTSWLHTIQDINISLWRTPEEVRSDKSIFINQGEWELLGVFTKFQEFSIETSNSYAEMKFYVVIRRRPLFYAVSLLLPSIFLMVVDIVGFCLPPDSGERVSFKITLLLGYSVFLIIVSDTLPATAIGTPLIGVYFVVCMALLVISLAETIFIVQLVHKQDLQRPVPDWLRHLVLDRIAWLLCLGEQPMAHRPPATFQANKTDDCSAMGNHCSHVGSPQDLEKTSRSRDSPLPPPREASLAVRGLLQELSSIRHSLEKRDEMREVARDWLRVGYVLDRLLFRIYLLAVLAYSITLVTLWSIWHYS.

The N-terminal stretch at M1–G23 is a signal peptide. Residues S24–R246 lie on the Extracellular side of the membrane. 3 N-linked (GlcNAc...) asparagine glycosylation sites follow: N109, N175, and N191. C162 and C176 are disulfide-bonded. A helical transmembrane segment spans residues P247–P273. Over D274 to R278 the chain is Cytoplasmic. A helical membrane pass occupies residues V279–S297. Residues D298 to T307 are Extracellular-facing. The helical transmembrane segment at P308–A326 threads the bilayer. The Cytoplasmic segment spans residues E327 to R460. The tract at residues V393 to R414 is disordered. Basic and acidic residues predominate over residues D398 to D407. Positions A419–D455 are HA-stretch; determines single-channel conductance in 5-HT3 receptors. A helical membrane pass occupies residues I461–W480. At H481–S483 the chain is on the extracellular side.

The protein belongs to the ligand-gated ion channel (TC 1.A.9) family. 5-hydroxytryptamine receptor (TC 1.A.9.2) subfamily. HTR3A sub-subfamily. In terms of assembly, forms homopentameric as well as heteropentameric serotonin-activated cation-selective channel complexes with HTR3B or HTR3C or HTR3D or HTR3E. The homomeric complex is functional but exhibits low conductance with modified voltage dependence, and decreased agonist and antagonist affinity. Heteropentameric complexes display properties which resemble that of neuronal serotonin-activated channels in vivo. Interacts with RIC3. As to expression, expressed in central and peripheral neurons.

The protein resides in the postsynaptic cell membrane. It is found in the cell membrane. The enzyme catalyses Na(+)(in) = Na(+)(out). It carries out the reaction K(+)(in) = K(+)(out). It catalyses the reaction Ca(2+)(in) = Ca(2+)(out). The catalysed reaction is Mg(2+)(in) = Mg(2+)(out). Forms serotonin (5-hydroxytryptamine/5-HT3)-activated cation-selective channel complexes, which when activated cause fast, depolarizing responses in neurons. In Rattus norvegicus (Rat), this protein is 5-hydroxytryptamine receptor 3A.